The following is a 122-amino-acid chain: S-adenosylmethionine decarboxylase proenzyme (122 aa).

The active-site Schiff-base intermediate with substrate; via pyruvic acid is the Ser-61. Ser-61 is subject to Pyruvic acid (Ser); by autocatalysis. The active-site Proton acceptor; for processing activity is His-66. Catalysis depends on Cys-81, which acts as the Proton donor; for catalytic activity.

This sequence belongs to the prokaryotic AdoMetDC family. Type 1 subfamily. As to quaternary structure, heterotetramer of two alpha and two beta chains arranged as a dimer of alpha/beta heterodimers. Requires pyruvate as cofactor. Is synthesized initially as an inactive proenzyme. Formation of the active enzyme involves a self-maturation process in which the active site pyruvoyl group is generated from an internal serine residue via an autocatalytic post-translational modification. Two non-identical subunits are generated from the proenzyme in this reaction, and the pyruvate is formed at the N-terminus of the alpha chain, which is derived from the carboxyl end of the proenzyme. The post-translation cleavage follows an unusual pathway, termed non-hydrolytic serinolysis, in which the side chain hydroxyl group of the serine supplies its oxygen atom to form the C-terminus of the beta chain, while the remainder of the serine residue undergoes an oxidative deamination to produce ammonia and the pyruvoyl group blocking the N-terminus of the alpha chain.

The enzyme catalyses S-adenosyl-L-methionine + H(+) = S-adenosyl 3-(methylsulfanyl)propylamine + CO2. It participates in amine and polyamine biosynthesis; S-adenosylmethioninamine biosynthesis; S-adenosylmethioninamine from S-adenosyl-L-methionine: step 1/1. In terms of biological role, catalyzes the decarboxylation of S-adenosylmethionine to S-adenosylmethioninamine (dcAdoMet), the propylamine donor required for the synthesis of the polyamines spermine and spermidine from the diamine putrescine. The polypeptide is S-adenosylmethionine decarboxylase proenzyme (Prochlorococcus marinus (strain MIT 9211)).